The primary structure comprises 412 residues: Argininosuccinate synthase (412 aa).

Residues 10 to 18 (AYSGGLDTS) and A36 each bind ATP. The L-citrulline site is built by Y87 and S92. Y87 is subject to Phosphotyrosine. Position 112 is an N6-acetyllysine (K112). The residue at position 113 (Y113) is a Phosphotyrosine. 115–123 (SHGATGKGN) is a binding site for ATP. Residues T119, N123, and D124 each coordinate L-aspartate. N123 provides a ligand contact to L-citrulline. R127 is an L-citrulline binding site. N6-acetyllysine; by CLOCK is present on residues K165 and K176. Positions 180 and 189 each coordinate L-citrulline. At S180 the chain carries Phosphoserine. T219 is subject to Phosphothreonine. 2 residues coordinate L-citrulline: E270 and Y282.

It belongs to the argininosuccinate synthase family. Type 1 subfamily. In terms of assembly, homotetramer. Interacts with NMRAL1. Interacts with CLOCK; in a circadian manner. Forms tissue-specific complexes with ASL, SLC7A1, HSP90AA1 and nitric oxide synthase NOS1, NOS2 or NOS3; the complex regulates cell-autonomous L-arginine synthesis and citrulline recycling while channeling extracellular L-arginine to nitric oxide synthesis pathway. In terms of processing, acetylated by CLOCK in a circadian manner which negatively regulates its enzyme activity. Deacetylated by histone deacetylases. In terms of tissue distribution, expressed in adult liver.

Its subcellular location is the cytoplasm. The protein localises to the cytosol. It carries out the reaction L-citrulline + L-aspartate + ATP = 2-(N(omega)-L-arginino)succinate + AMP + diphosphate + H(+). The protein operates within amino-acid biosynthesis; L-arginine biosynthesis; L-arginine from L-ornithine and carbamoyl phosphate: step 2/3. It functions in the pathway nitrogen metabolism; urea cycle; (N(omega)-L-arginino)succinate from L-aspartate and L-citrulline: step 1/1. Functionally, one of the enzymes of the urea cycle, the metabolic pathway transforming neurotoxic amonia produced by protein catabolism into inocuous urea in the liver of ureotelic animals. Catalyzes the formation of arginosuccinate from aspartate, citrulline and ATP and together with ASL it is responsible for the biosynthesis of arginine in most body tissues. This is Argininosuccinate synthase from Homo sapiens (Human).